The primary structure comprises 1409 residues: Protein three rows (1409 aa).

The segment at 1052 to 1058 (VEPIRKQ) is separase cleavage-site. 2 disordered regions span residues 1260 to 1284 (PIGC…SDHV) and 1297 to 1409 (DDAA…RQRN). Low complexity-rich tracts occupy residues 1264–1273 (SNSSSSSSKS) and 1300–1310 (ASVSASTPAPS).

In terms of assembly, interacts with pim and Sse. Cleavage of thr contributes to inactivation of Sse.

The protein resides in the cytoplasm. Its function is as follows. Required specifically for chromosome disjunction during all mitoses; maternally provided protein is sufficient until mitosis 14 then zygotic protein is required. Involved in formation and/or maintenance of epithelial structures: bud extension during Malpighian tubule development, and foregut and hindgut morphogenesis. This is Protein three rows (thr) from Drosophila pseudoobscura pseudoobscura (Fruit fly).